A 163-amino-acid polypeptide reads, in one-letter code: Putative 4-hydroxy-4-methyl-2-oxoglutarate aldolase (163 aa).

Substrate is bound by residues 76–79 (GDMI) and R98. D99 serves as a coordination point for a divalent metal cation.

Belongs to the class II aldolase/RraA-like family. In terms of assembly, homotrimer. It depends on a divalent metal cation as a cofactor.

It catalyses the reaction 4-hydroxy-4-methyl-2-oxoglutarate = 2 pyruvate. It carries out the reaction oxaloacetate + H(+) = pyruvate + CO2. Functionally, catalyzes the aldol cleavage of 4-hydroxy-4-methyl-2-oxoglutarate (HMG) into 2 molecules of pyruvate. Also contains a secondary oxaloacetate (OAA) decarboxylase activity due to the common pyruvate enolate transition state formed following C-C bond cleavage in the retro-aldol and decarboxylation reactions. The sequence is that of Putative 4-hydroxy-4-methyl-2-oxoglutarate aldolase from Pseudomonas fluorescens (strain Pf0-1).